The sequence spans 197 residues: NADH-quinone oxidoreductase subunit C (197 aa).

This sequence belongs to the complex I 30 kDa subunit family. In terms of assembly, NDH-1 is composed of 14 different subunits. Subunits NuoB, C, D, E, F, and G constitute the peripheral sector of the complex.

The protein resides in the cell inner membrane. The enzyme catalyses a quinone + NADH + 5 H(+)(in) = a quinol + NAD(+) + 4 H(+)(out). Functionally, NDH-1 shuttles electrons from NADH, via FMN and iron-sulfur (Fe-S) centers, to quinones in the respiratory chain. The immediate electron acceptor for the enzyme in this species is believed to be ubiquinone. Couples the redox reaction to proton translocation (for every two electrons transferred, four hydrogen ions are translocated across the cytoplasmic membrane), and thus conserves the redox energy in a proton gradient. This is NADH-quinone oxidoreductase subunit C from Neisseria meningitidis serogroup B (strain ATCC BAA-335 / MC58).